We begin with the raw amino-acid sequence, 217 residues long: Uracil-DNA glycosylase (217 aa).

Residue D62 is the Proton acceptor of the active site.

This sequence belongs to the uracil-DNA glycosylase (UDG) superfamily. UNG family.

The protein resides in the cytoplasm. It catalyses the reaction Hydrolyzes single-stranded DNA or mismatched double-stranded DNA and polynucleotides, releasing free uracil.. Excises uracil residues from the DNA which can arise as a result of misincorporation of dUMP residues by DNA polymerase or due to deamination of cytosine. This chain is Uracil-DNA glycosylase, found in Streptococcus sanguinis (strain SK36).